The sequence spans 297 residues: uncharacterized protein (297 aa).

The segment at 267-297 (NTQHAGKPGAQHRTRRSPPAFRRADRLRQSA) is disordered. Residues 288–297 (RRADRLRQSA) are compositionally biased toward basic and acidic residues.

This is an uncharacterized protein from Treponema pallidum (strain Nichols).